We begin with the raw amino-acid sequence, 323 residues long: Lipoyl synthase (323 aa).

Cys61, Cys66, Cys72, Cys87, Cys91, Cys94, and Ser300 together coordinate [4Fe-4S] cluster. Residues 73–289 (WDKKHATFMI…ETVAYSKGFL (217 aa)) form the Radical SAM core domain.

The protein belongs to the radical SAM superfamily. Lipoyl synthase family. It depends on [4Fe-4S] cluster as a cofactor.

Its subcellular location is the cytoplasm. It carries out the reaction [[Fe-S] cluster scaffold protein carrying a second [4Fe-4S](2+) cluster] + N(6)-octanoyl-L-lysyl-[protein] + 2 oxidized [2Fe-2S]-[ferredoxin] + 2 S-adenosyl-L-methionine + 4 H(+) = [[Fe-S] cluster scaffold protein] + N(6)-[(R)-dihydrolipoyl]-L-lysyl-[protein] + 4 Fe(3+) + 2 hydrogen sulfide + 2 5'-deoxyadenosine + 2 L-methionine + 2 reduced [2Fe-2S]-[ferredoxin]. Its pathway is protein modification; protein lipoylation via endogenous pathway; protein N(6)-(lipoyl)lysine from octanoyl-[acyl-carrier-protein]: step 2/2. In terms of biological role, catalyzes the radical-mediated insertion of two sulfur atoms into the C-6 and C-8 positions of the octanoyl moiety bound to the lipoyl domains of lipoate-dependent enzymes, thereby converting the octanoylated domains into lipoylated derivatives. This Rhizobium leguminosarum bv. trifolii (strain WSM2304) protein is Lipoyl synthase.